The sequence spans 79 residues: MQIKNIVAVLATVTAINAQVGIEPNATTPNATQPNATQPNTTLPTASVTTTVSIGEAVVNTMAAGAFGAAIAAGVAFLF.

Residues 1 to 18 form the signal peptide; it reads MQIKNIVAVLATVTAINA. Residues 24-44 are disordered; that stretch reads PNATTPNATQPNATQPNTTLP. Asparagine 25, asparagine 30, asparagine 35, and asparagine 40 each carry an N-linked (GlcNAc...) asparagine glycan. A lipid anchor (GPI-anchor amidated glycine) is attached at glycine 55. Residues 56–79 constitute a propeptide, removed in mature form; the sequence is EAVVNTMAAGAFGAAIAAGVAFLF.

It localises to the cell membrane. This is an uncharacterized protein from Saccharomyces cerevisiae (strain ATCC 204508 / S288c) (Baker's yeast).